The chain runs to 152 residues: Synaptobrevin (152 aa).

Over residues 1-16 (MENNEAPSPSGSNNND) the composition is skewed to polar residues. Positions 1–30 (MENNEAPSPSGSNNNDFPILPPPPNANDNY) are disordered. The Cytoplasmic portion of the chain corresponds to 1–110 (MENNEAPSPS…KRKQWWANMK (110 aa)). A v-SNARE coiled-coil homology domain is found at 47–107 (KLQQTQAKVD…GKLKRKQWWA (61 aa)). A helical; Anchor for type IV membrane protein transmembrane segment spans residues 111–130 (MMIILGVIAVVLLIIVLVSV). Residues 131–152 (WPSSSDSGSGGGNKAITQAPPH) are Vesicular-facing. The tract at residues 133–152 (SSSDSGSGGGNKAITQAPPH) is disordered.

The protein belongs to the synaptobrevin family. In terms of assembly, part of the SNARE core complex containing Snap25 and syntaxin. Ubiquitinated by gzl, regulating endocytic trafficking. In wing imaginal disks, ubiquitination by gzl promotes transcytosis of wingless (wg) to the basolateral surface. Not nervous system-specific; abundant in cells of the gut and Malpighian tubules.

Its subcellular location is the cytoplasmic vesicle. It is found in the secretory vesicle. The protein resides in the synaptic vesicle membrane. The protein localises to the cell membrane. Functionally, involved in the targeting and/or fusion of transport vesicles to their target membrane. The sequence is that of Synaptobrevin from Drosophila melanogaster (Fruit fly).